Here is a 100-residue protein sequence, read N- to C-terminus: Urease subunit gamma (100 aa).

It belongs to the urease gamma subunit family. Heterotrimer of UreA (gamma), UreB (beta) and UreC (alpha) subunits. Three heterotrimers associate to form the active enzyme.

It is found in the cytoplasm. The enzyme catalyses urea + 2 H2O + H(+) = hydrogencarbonate + 2 NH4(+). The protein operates within nitrogen metabolism; urea degradation; CO(2) and NH(3) from urea (urease route): step 1/1. The sequence is that of Urease subunit gamma from Halalkalibacterium halodurans (strain ATCC BAA-125 / DSM 18197 / FERM 7344 / JCM 9153 / C-125) (Bacillus halodurans).